Consider the following 740-residue polypeptide: Elongation factor 2 (740 aa).

A tr-type G domain is found at 18-263 (EQVRNIGIIA…MVVRWVPNPR (246 aa)). GTP-binding positions include 27 to 34 (AHVDHGKT), 93 to 97 (DTPGH), and 147 to 150 (NKVD). At histidine 606 the chain carries Diphthamide.

It belongs to the TRAFAC class translation factor GTPase superfamily. Classic translation factor GTPase family. EF-G/EF-2 subfamily.

The protein localises to the cytoplasm. In terms of biological role, catalyzes the GTP-dependent ribosomal translocation step during translation elongation. During this step, the ribosome changes from the pre-translocational (PRE) to the post-translocational (POST) state as the newly formed A-site-bound peptidyl-tRNA and P-site-bound deacylated tRNA move to the P and E sites, respectively. Catalyzes the coordinated movement of the two tRNA molecules, the mRNA and conformational changes in the ribosome. The sequence is that of Elongation factor 2 from Ignicoccus hospitalis (strain KIN4/I / DSM 18386 / JCM 14125).